The primary structure comprises 310 residues: Putative type II methyltransferase M.MJ0563P (310 aa).

In terms of domain architecture, SAM-dependent MTase C5-type spans 1–310 (MNVIDLFSGC…AIAKEIKKQL (310 aa)). Residue Cys77 is part of the active site.

The protein belongs to the class I-like SAM-binding methyltransferase superfamily. C5-methyltransferase family.

It carries out the reaction a 2'-deoxycytidine in DNA + S-adenosyl-L-methionine = a 5-methyl-2'-deoxycytidine in DNA + S-adenosyl-L-homocysteine + H(+). Its function is as follows. A putative methylase that may protect DNA from cleavage by an unknown endonuclease. This Methanocaldococcus jannaschii (strain ATCC 43067 / DSM 2661 / JAL-1 / JCM 10045 / NBRC 100440) (Methanococcus jannaschii) protein is Putative type II methyltransferase M.MJ0563P.